Reading from the N-terminus, the 113-residue chain is uncharacterized protein (113 aa).

2 helical membrane passes run 1–21 (MLIAGTLCVCAAVISAVFGTW) and 48–68 (IMLAAGGVVALVAVAHTALIV).

It to M.tuberculosis Rv0039.

It localises to the cell membrane. This is an uncharacterized protein from Mycobacterium leprae (strain TN).